A 275-amino-acid polypeptide reads, in one-letter code: Mitochondrial prohibitin complex protein 1 (275 aa).

The stretch at 180–213 (REFTEAVEMKQVAQQEAEKARYLVEKAEQMKIAA) forms a coiled coil.

It belongs to the prohibitin family. As to quaternary structure, high molecular weight complex that consist of phb-1 and phb-2.

It is found in the mitochondrion inner membrane. Functionally, PHB proteins are essential during embryonic development and are required for somatic and germline differentiation in the larval gonad. A deficiency in PHB proteins results in altered mitochondrial biogenesis in body wall muscle cells. The chain is Mitochondrial prohibitin complex protein 1 (phb-1) from Caenorhabditis elegans.